The sequence spans 174 residues: Protein C (174 aa).

This sequence belongs to the morbillivirus protein C family.

This Phocine distemper virus (PDV) protein is Protein C (P/V/C).